The chain runs to 275 residues: MVDIYGLVVALILGIVEGLTEFLPVSSTGHMILVSYMLGFNNDKTKIFEVLIQLGSILAVIIICKQRWFLLFGLNLKKWEIYQHNINHGSRLHLYHIILGLIPSSILGLMFYEQIKSFFEPKYVMYSLILGSLLLLISQLIHDKKPRATCIDDISYLQAFLIGCFQCFALLPGFSRSGATISGGMLVGVSSDAAFEFSFLLAVPMIFGATILDLYRHLPVLSLDDIPMFIIGFITAFLVALITIKLFWRIIKGMSFIPFVLYRFLLVIVFYLILI.

The next 8 membrane-spanning stretches (helical) occupy residues 4–24 (IYGLVVALILGIVEGLTEFLP), 54–74 (LGSILAVIIICKQRWFLLFGL), 92–112 (LHLYHIILGLIPSSILGLMFY), 123–143 (YVMYSLILGSLLLLISQLIHD), 154–174 (ISYLQAFLIGCFQCFALLPGF), 194–214 (AFEFSFLLAVPMIFGATILDL), 228–248 (MFIIGFITAFLVALITIKLFW), and 255–275 (SFIPFVLYRFLLVIVFYLILI).

The protein belongs to the UppP family.

The protein localises to the cell membrane. It carries out the reaction di-trans,octa-cis-undecaprenyl diphosphate + H2O = di-trans,octa-cis-undecaprenyl phosphate + phosphate + H(+). Its function is as follows. Catalyzes the dephosphorylation of undecaprenyl diphosphate (UPP). Confers resistance to bacitracin. The protein is Undecaprenyl-diphosphatase of Baumannia cicadellinicola subsp. Homalodisca coagulata.